The following is a 695-amino-acid chain: Glycine--tRNA ligase beta subunit (695 aa).

It belongs to the class-II aminoacyl-tRNA synthetase family. As to quaternary structure, tetramer of two alpha and two beta subunits.

It localises to the cytoplasm. It carries out the reaction tRNA(Gly) + glycine + ATP = glycyl-tRNA(Gly) + AMP + diphosphate. The protein is Glycine--tRNA ligase beta subunit of Lawsonia intracellularis (strain PHE/MN1-00).